The primary structure comprises 130 residues: Small ribosomal subunit protein uS11 (130 aa).

The protein belongs to the universal ribosomal protein uS11 family. In terms of assembly, part of the 30S ribosomal subunit. Interacts with proteins S7 and S18. Binds to IF-3.

Located on the platform of the 30S subunit, it bridges several disparate RNA helices of the 16S rRNA. Forms part of the Shine-Dalgarno cleft in the 70S ribosome. This Pseudoalteromonas atlantica (strain T6c / ATCC BAA-1087) protein is Small ribosomal subunit protein uS11.